Consider the following 76-residue polypeptide: DNA-directed RNA polymerase subunit omega (76 aa).

This sequence belongs to the RNA polymerase subunit omega family. In terms of assembly, in cyanobacteria the RNAP catalytic core is composed of 2 alpha, 1 beta, 1 beta', 1 gamma and 1 omega subunit. When a sigma factor is associated with the core the holoenzyme is formed, which can initiate transcription.

The catalysed reaction is RNA(n) + a ribonucleoside 5'-triphosphate = RNA(n+1) + diphosphate. In terms of biological role, promotes RNA polymerase assembly. Latches the N- and C-terminal regions of the beta' subunit thereby facilitating its interaction with the beta and alpha subunits. The polypeptide is DNA-directed RNA polymerase subunit omega (Acaryochloris marina (strain MBIC 11017)).